Consider the following 32-residue polypeptide: MSDIN-like toxin proprotein 1 (32 aa).

Positions 1–10 (MSDINATRLP) are excised as a propeptide. A cross-link (cyclopeptide (Ile-Pro)) is located at residues 11–18 (IFWFIYFP). Positions 19–32 (CVSDVDSTLTRGER) are excised as a propeptide.

The protein belongs to the MSDIN fungal toxin family. Post-translationally, processed by the macrocyclase-peptidase enzyme POPB to yield a toxic cyclic octapeptide. POPB first removes 10 residues from the N-terminus. Conformational trapping of the remaining peptide forces the enzyme to release this intermediate rather than proceed to macrocyclization. The enzyme rebinds the remaining peptide in a different conformation and catalyzes macrocyclization of the N-terminal 8 residues. As to expression, expressed in basidiocarps.

Functionally, probable toxin that belongs to the MSDIN-like toxin family responsible for a large number of food poisoning cases and deaths. This is MSDIN-like toxin proprotein 1 from Amanita exitialis (Guangzhou destroying angel).